The primary structure comprises 291 residues: N-acetylmannosamine kinase (291 aa).

Residues Ala5–Lys12 and Gly132–Ser139 each bind ATP. The Zn(2+) site is built by His156, Cys166, Cys168, and Cys173.

Belongs to the ROK (NagC/XylR) family. NanK subfamily. Homodimer.

It carries out the reaction an N-acyl-D-mannosamine + ATP = an N-acyl-D-mannosamine 6-phosphate + ADP + H(+). Its pathway is amino-sugar metabolism; N-acetylneuraminate degradation; D-fructose 6-phosphate from N-acetylneuraminate: step 2/5. Functionally, catalyzes the phosphorylation of N-acetylmannosamine (ManNAc) to ManNAc-6-P. This is N-acetylmannosamine kinase from Escherichia coli O9:H4 (strain HS).